The primary structure comprises 34 residues: Peptide 9797 (34 aa).

In terms of tissue distribution, expressed by the venom gland.

It is found in the secreted. The chain is Peptide 9797 from Tityus stigmurus (Brazilian scorpion).